Reading from the N-terminus, the 271-residue chain is Repressed by EFG1 protein 1 (271 aa).

A signal peptide spans 1–19; it reads MKITNTLLNAAALLAVTEA. The disordered stretch occupies residues 59–118; sequence QLTSKTQDSTSPTTSSVNSLTSSSATSYVETTTPAPSSSTLTTSTISSSTASEDSDATPT. A compositionally biased stretch (low complexity) spans 67-118; it reads STSPTTSSVNSLTSSSATSYVETTTPAPSSSTLTTSTISSSTASEDSDATPT. Positions 128–244 constitute an SCP domain; that stretch reads LKEHNVKRAL…AWRQITVCEY (117 aa). Residue asparagine 254 is glycosylated (N-linked (GlcNAc...) asparagine).

It belongs to the CRISP family.

The protein resides in the secreted. Its subcellular location is the cell wall. Cell wall protein involved in cell wall integrity and which plays a role in virulence. This is Repressed by EFG1 protein 1 (RBE1) from Candida albicans (strain SC5314 / ATCC MYA-2876) (Yeast).